A 428-amino-acid chain; its full sequence is 3-phosphoshikimate 1-carboxyvinyltransferase (428 aa).

Residues K19, S20, and R24 each contribute to the 3-phosphoshikimate site. Phosphoenolpyruvate is bound at residue K19. Phosphoenolpyruvate-binding residues include G91 and R119. 4 residues coordinate 3-phosphoshikimate: S164, Q166, D312, and K339. Q166 provides a ligand contact to phosphoenolpyruvate. The active-site Proton acceptor is the D312. Phosphoenolpyruvate is bound by residues R343 and R386.

The protein belongs to the EPSP synthase family. In terms of assembly, monomer.

The protein resides in the cytoplasm. The enzyme catalyses 3-phosphoshikimate + phosphoenolpyruvate = 5-O-(1-carboxyvinyl)-3-phosphoshikimate + phosphate. The protein operates within metabolic intermediate biosynthesis; chorismate biosynthesis; chorismate from D-erythrose 4-phosphate and phosphoenolpyruvate: step 6/7. In terms of biological role, catalyzes the transfer of the enolpyruvyl moiety of phosphoenolpyruvate (PEP) to the 5-hydroxyl of shikimate-3-phosphate (S3P) to produce enolpyruvyl shikimate-3-phosphate and inorganic phosphate. The chain is 3-phosphoshikimate 1-carboxyvinyltransferase from Bacillus licheniformis (strain ATCC 14580 / DSM 13 / JCM 2505 / CCUG 7422 / NBRC 12200 / NCIMB 9375 / NCTC 10341 / NRRL NRS-1264 / Gibson 46).